Reading from the N-terminus, the 163-residue chain is Transcriptional repressor NrdR (163 aa).

A zinc finger spans residues 3 to 34 (CPFCRHPDSRVVDSRVSDDGSSIRRRRQCPQC). An ATP-cone domain is found at 46–136 (LTVIKRSGIG…VYQAFESLDD (91 aa)).

Belongs to the NrdR family. Zn(2+) is required as a cofactor.

Negatively regulates transcription of bacterial ribonucleotide reductase nrd genes and operons by binding to NrdR-boxes. This chain is Transcriptional repressor NrdR, found in Renibacterium salmoninarum (strain ATCC 33209 / DSM 20767 / JCM 11484 / NBRC 15589 / NCIMB 2235).